A 1041-amino-acid chain; its full sequence is MAAAAAAGAASGLPGPVAQGLKEALVDTLTGILSPVQEVRAAAEEQIKVLEVTEEFGVHLAELTVDPQGALAIRQLASVILKQYVETHWCAQSEKFRPPETTERAKIVIRELLPNGLRESISKVRSSVAYAVSAIAHWDWPEAWPQLFNLLMEMLVSGDLNAVHGAMRVLTEFTREVTDTQMPLVAPVILPEMYKIFTMAEVYGIRTRSRAVEIFTTCAHMICNMEELEKGAAKVLIFPVVQQFTEAFVQALQIPDGPTSDSGFKMEVLKAVTALVKNFPKHMVSSMQQILPIVWNTLTESAAFYVRTEVNYTEEVEDPVDSDGEVLGFENLVFSIFEFVHALLENSKFKSTVKKALPELIYYIILYMQITEEQIKVWTANPQQFVEDEDDDTFSYTVRIAAQDLLLAVATDFQNESAAALAAAATRHLQEAEQTKNSGTEHWWKIHEACMLALGSVKAIITDSVKNGRIHFDMHGFLTNVILADLNLSVSPFLLGRALWAASRFTVAMSPELIQQFLQATVSGLHETQPPSVRISAVRAIWGYCDQLKVSESTHVLQPFLPSILDGLIHLAAQFSSEVLNLVMETLCIVCTVDPEFTASMESKICPFTIAIFLKYSNDPVVASLAQDIFKELSQIEACQGPMQMRLIPTLVSIMQAPADKIPAGLCATAIDILTTVVRNTKPPLSQLLICQAFPAVAQCTLHTDDNATMQNGGECLRAYVSVTLEQVAQWHDEQGHNGLWYVMQVVSQLLDPRTSEFTAAFVGRLVSTLISKAGRELGENLDQILRAILSKMQQAETLSVMQSLIMVFAHLVHTQLEPLLEFLCSLPGPTGKPALEFVMAEWTSRQHLFYGQYEGKVSSVALCKLLQHGINADDKRLQDIRVKGEEIYSMDEGIRTRSKSAKNPERWTNIPLLVKILKLIINELSNVMEANAARQATPAEWSQDDSNDMWEDQEEEEEEEEDGLAGQLLSDILATSKYEEDYYEDDEEDDPDALKDPLYQIDLQAYLTDFLCQFAQQPCYIMFSGHLNDNERRVLQTIGI.

Residue A2 is modified to N-acetylalanine. An Importin N-terminal domain is found at 43–119 (AEEQIKVLEV…RELLPNGLRE (77 aa)). The segment at 936–967 (QATPAEWSQDDSNDMWEDQEEEEEEEEDGLAG) is disordered. Residues 943–964 (SQDDSNDMWEDQEEEEEEEEDG) are compositionally biased toward acidic residues.

The protein belongs to the importin beta family. In terms of assembly, interacts with histones H2A, H2B, H3 and H4. The binding is coupled to RanGTP cycles. Interacts with AKIRIN2; promoting association with pre-assembled proteasomes. Associates with pre-assembled proteasomes; interaction is indirect and mediated via interaction with AKIRIN2. Interacts with PPP2R1A and PPP2R1B.

The protein localises to the cytoplasm. It is found in the nucleus. In terms of biological role, nuclear transport receptor that mediates nuclear import of proteins, such as histones, proteasome and actin. Serves as receptor for nuclear localization signals (NLS) in cargo substrates. Is thought to mediate docking of the importin/substrate complex to the nuclear pore complex (NPC) through binding to nucleoporin and the complex is subsequently translocated through the pore by an energy requiring, Ran-dependent mechanism. At the nucleoplasmic side of the NPC, Ran binds to the importin, the importin/substrate complex dissociates and importin is re-exported from the nucleus to the cytoplasm where GTP hydrolysis releases Ran. The directionality of nuclear import is thought to be conferred by an asymmetric distribution of the GTP- and GDP-bound forms of Ran between the cytoplasm and nucleus. Mediates the import of pre-assembled proteasomes into the nucleus; AKIRIN2 acts as a molecular bridge between IPO9 and the proteasome complex. Mediates the nuclear import of histones H2A, H2B, H4 and H4. In addition to nuclear import, also acts as a chaperone for histones by preventing inappropriate non-nucleosomal interactions. Mediates the nuclear import of actin. This is Importin-9 from Homo sapiens (Human).